Consider the following 249-residue polypeptide: Ribonuclease 3 (249 aa).

Positions 29-151 (SSDIEVIKKN…LIGALYECLR (123 aa)) constitute an RNase III domain. Residue E65 participates in Mg(2+) binding. The active site involves D69. Positions 137 and 140 each coordinate Mg(2+). E140 is an active-site residue. A DRBM domain is found at 179–249 (NEKSALQEWS…AKEALKKLTN (71 aa)). Residues 227-249 (GWGSSRKKAQKEAAKEALKKLTN) form a disordered region. Basic and acidic residues predominate over residues 236–249 (QKEAAKEALKKLTN).

The protein belongs to the ribonuclease III family. In terms of assembly, homodimer. It depends on Mg(2+) as a cofactor.

The protein localises to the cytoplasm. The enzyme catalyses Endonucleolytic cleavage to 5'-phosphomonoester.. In terms of biological role, digests double-stranded RNA. Involved in the processing of primary rRNA transcript to yield the immediate precursors to the large and small rRNAs (23S and 16S). Processes some mRNAs, and tRNAs when they are encoded in the rRNA operon. Processes pre-crRNA and tracrRNA of type II CRISPR loci if present in the organism. The chain is Ribonuclease 3 from Prochlorococcus marinus (strain SARG / CCMP1375 / SS120).